The chain runs to 481 residues: F-box/LRR-repeat protein At3g03360 (481 aa).

Residues 1–28 are disordered; that stretch reads MEKESQENSTRPDASSTVFSSSKSTCAS. Over residues 14 to 28 the composition is skewed to low complexity; it reads ASSTVFSSSKSTCAS. An F-box domain is found at 36-84; that stretch reads GDLISRLPDDILQLILSYLPTRLAIKTSVLSRRWRHVWSDTWSLSFHRD. LRR repeat units lie at residues 118-145, 196-221, 295-320, 350-375, and 413-439; these read SRPD…SLYL, HCNI…LLFF, EADF…TLGA, ISRY…TIHP, and RRNV…ELIV.

The protein is F-box/LRR-repeat protein At3g03360 of Arabidopsis thaliana (Mouse-ear cress).